The sequence spans 480 residues: MAEEVNERTRLLSQSDDPSPSLEELEEWEEPRNWKVSYRWLCIAVISVYGLISPVIAAIIVPAMPQIATDLNVTDPGMLQAFVSVYVLGWSFAPLVVGPLSEVYGRISLLNTGHGLFLVFNALCAFARSDYELLILRFITGAVGSAPLSIGAGIIGDLWAPEERGLSISLYTLGPLLGPAIAPITGAYIVSHTSWRAIFAWCSLYILITWVVGLCTLRETFRPVLIQRKQAAAVRKGQLPGSVQHHHKSLADVFRQDLRRPFTFLGTQPIIQVLSLFMGYLFGLNHLSITTFESVWTDIYNQTPSRAALNYISIAGGFILGSQITGSLNDRIYIYYTSKDPAKGTPELRTILMLPAALLVPTGLLIYGWSAQTHSHWIMPNIGIGIYALGLIMSYQCIQAYVLDCYAVYAASAMGALTILRSLLGFVLPILAPLIYRTLGYGWGSSLLALWALVMGGLVPILLWRYGAVLRKRSGILEEM.

Over residues methionine 1–arginine 10 the composition is skewed to basic and acidic residues. A disordered region spans residues methionine 1–glutamate 24. Over residues leucine 11 to leucine 22 the composition is skewed to low complexity. Transmembrane regions (helical) follow at residues leucine 41–valine 61, alanine 81–serine 101, isoleucine 107–alanine 127, phenylalanine 138–leucine 158, leucine 170–valine 190, alanine 197–leucine 217, phenylalanine 264–leucine 284, alanine 308–leucine 328, isoleucine 351–alanine 371, isoleucine 378–isoleucine 398, glycine 415–isoleucine 435, and tryptophan 443–leucine 463.

It belongs to the major facilitator superfamily.

It localises to the membrane. MFS-type transporter; part of the gene cluster that mediates the biosynthesis of oryzines, natural products with an unusual maleidride backbone. This Aspergillus oryzae (strain ATCC 42149 / RIB 40) (Yellow koji mold) protein is MFS-type transporter oryF.